Reading from the N-terminus, the 333-residue chain is D-fructose 1,6-bisphosphatase class 2/sedoheptulose 1,7-bisphosphatase (333 aa).

The Mn(2+) site is built by Asp33, Glu57, Asp85, and Glu88. Residues 88–90 (EGT), Tyr119, 164–166 (RTR), and 186–188 (DGD) each bind substrate. Glu213 is a binding site for Mn(2+).

It belongs to the FBPase class 2 family. As to quaternary structure, homotetramer. Requires Mn(2+) as cofactor.

The catalysed reaction is beta-D-fructose 1,6-bisphosphate + H2O = beta-D-fructose 6-phosphate + phosphate. It carries out the reaction D-sedoheptulose 1,7-bisphosphate + H2O = D-sedoheptulose 7-phosphate + phosphate. The protein operates within carbohydrate biosynthesis; Calvin cycle. Functionally, catalyzes the hydrolysis of fructose 1,6-bisphosphate (Fru 1,6-P2) and sedoheptulose 1,7-bisphosphate (Sed 1,7-P2) to fructose 6-phosphate and sedoheptulose 7-phosphate, respectively. The chain is D-fructose 1,6-bisphosphatase class 2/sedoheptulose 1,7-bisphosphatase from Prochlorococcus marinus (strain AS9601).